A 94-amino-acid polypeptide reads, in one-letter code: Integration host factor subunit beta (94 aa).

It belongs to the bacterial histone-like protein family. In terms of assembly, heterodimer of an alpha and a beta chain.

This protein is one of the two subunits of integration host factor, a specific DNA-binding protein that functions in genetic recombination as well as in transcriptional and translational control. This Aeromonas hydrophila subsp. hydrophila (strain ATCC 7966 / DSM 30187 / BCRC 13018 / CCUG 14551 / JCM 1027 / KCTC 2358 / NCIMB 9240 / NCTC 8049) protein is Integration host factor subunit beta.